The chain runs to 299 residues: MLFQEIIFKLNEFWHKQGCIIQQPYDIEVGAGTMNPATFFRVLGPEPWYVAYVEPSRRPTDGRYGENPNRLQHYYQYQVILKPSPANVQEIYIESLEYLGIDIEKHDIRFVEDNWESPTLGAWGIGWEVWLDGMEITQFTYFQQCGGFDLFPISAEITYGLERIAMYIQGIDDFKDIKWQDGITYGDIHLQSEVENCIYNFELADVERLRLLFNEYEKEAERLLNEGLTFPGYDYVLKCSHTFNLLDARGAISVVQRSQYISRIRRLAAKAAENYLKSREALGFPLLNKAWRKEEAQIG.

It belongs to the class-II aminoacyl-tRNA synthetase family. As to quaternary structure, tetramer of two alpha and two beta subunits.

The protein resides in the cytoplasm. The enzyme catalyses tRNA(Gly) + glycine + ATP = glycyl-tRNA(Gly) + AMP + diphosphate. This Dictyoglomus thermophilum (strain ATCC 35947 / DSM 3960 / H-6-12) protein is Glycine--tRNA ligase alpha subunit.